The following is a 313-amino-acid chain: Porphobilinogen deaminase (313 aa).

At Cys242 the chain carries S-(dipyrrolylmethanemethyl)cysteine.

The protein belongs to the HMBS family. As to quaternary structure, monomer. The cofactor is dipyrromethane.

The catalysed reaction is 4 porphobilinogen + H2O = hydroxymethylbilane + 4 NH4(+). Its pathway is porphyrin-containing compound metabolism; protoporphyrin-IX biosynthesis; coproporphyrinogen-III from 5-aminolevulinate: step 2/4. Tetrapolymerization of the monopyrrole PBG into the hydroxymethylbilane pre-uroporphyrinogen in several discrete steps. This is Porphobilinogen deaminase from Yersinia pestis bv. Antiqua (strain Angola).